The sequence spans 129 residues: Antileukoproteinase (129 aa).

Positions Gly-1 to Gly-22 are cleaved as a signal peptide. WAP domains lie at Asn-25–Val-73 and Val-79–Val-127. 8 disulfide bridges follow: Cys-32-Cys-61, Cys-40-Cys-65, Cys-48-Cys-60, Cys-54-Cys-69, Cys-86-Cys-115, Cys-93-Cys-119, Cys-102-Cys-114, and Cys-108-Cys-123. Residues Val-81 to Ala-129 form an elastase inhibitory domain region.

Interacts with GRN; interaction protects progranulin from proteolysis. As to expression, found in pregnant endometrium and myometrium, placenta, allantoic fluids, fetal cord blood, and fetal liver. Also found in uterus and lung.

It is found in the secreted. Functionally, acid-stable proteinase inhibitor with strong affinities for trypsin, chymotrypsin, elastase, and cathepsin G. Modulates the inflammatory and immune responses after bacterial infection, and after infection by the intracellular parasite L.major. Down-regulates responses to bacterial lipopolysaccharide (LPS). Plays a role in regulating the activation of NF-kappa-B and inflammatory responses. Has antimicrobial activity against mycobacteria, but not against salmonella. Contributes to normal resistance against infection by M.tuberculosis. Required for normal resistance to infection by L.major. Required for normal wound healing, probably by preventing tissue damage by limiting protease activity. Together with ELANE, required for normal differentiation and proliferation of bone marrow myeloid cells. This Sus scrofa (Pig) protein is Antileukoproteinase (SLPI).